Here is a 326-residue protein sequence, read N- to C-terminus: Pyruvate dehydrogenase E1 component subunit beta (326 aa).

Glu-59 contacts thiamine diphosphate.

In terms of assembly, heterodimer of an alpha and a beta chain. Requires thiamine diphosphate as cofactor.

It carries out the reaction N(6)-[(R)-lipoyl]-L-lysyl-[protein] + pyruvate + H(+) = N(6)-[(R)-S(8)-acetyldihydrolipoyl]-L-lysyl-[protein] + CO2. Its function is as follows. The pyruvate dehydrogenase complex catalyzes the overall conversion of pyruvate to acetyl-CoA and CO(2). It contains multiple copies of three enzymatic components: pyruvate dehydrogenase (E1), dihydrolipoamide acetyltransferase (E2) and lipoamide dehydrogenase (E3). This chain is Pyruvate dehydrogenase E1 component subunit beta (pdhB), found in Rickettsia felis (strain ATCC VR-1525 / URRWXCal2) (Rickettsia azadi).